A 319-amino-acid polypeptide reads, in one-letter code: GTP 3',8-cyclase (319 aa).

One can recognise a Radical SAM core domain in the interval Lys4–Leu227. Arg13 contacts GTP. Residues Cys20 and Cys24 each contribute to the [4Fe-4S] cluster site. Residue Tyr26 participates in S-adenosyl-L-methionine binding. A [4Fe-4S] cluster-binding site is contributed by Cys27. GTP is bound at residue Arg63. Gly67 lines the S-adenosyl-L-methionine pocket. Position 94 (Thr94) interacts with GTP. Ser118 is an S-adenosyl-L-methionine binding site. Lys155 contributes to the GTP binding site. Met189 lines the S-adenosyl-L-methionine pocket. [4Fe-4S] cluster contacts are provided by Cys249 and Cys252. GTP is bound at residue Arg254 to Arg256. Cys266 is a [4Fe-4S] cluster binding site.

This sequence belongs to the radical SAM superfamily. MoaA family. Monomer and homodimer. It depends on [4Fe-4S] cluster as a cofactor.

The enzyme catalyses GTP + AH2 + S-adenosyl-L-methionine = (8S)-3',8-cyclo-7,8-dihydroguanosine 5'-triphosphate + 5'-deoxyadenosine + L-methionine + A + H(+). It functions in the pathway cofactor biosynthesis; molybdopterin biosynthesis. Its function is as follows. Catalyzes the cyclization of GTP to (8S)-3',8-cyclo-7,8-dihydroguanosine 5'-triphosphate. In Clostridium botulinum (strain ATCC 19397 / Type A), this protein is GTP 3',8-cyclase.